Here is a 150-residue protein sequence, read N- to C-terminus: Protein E6 (150 aa).

2 zinc fingers span residues 31-67 (CVFC…CACC) and 104-140 (CYLC…CLHC).

This sequence belongs to the papillomaviridae E6 protein family. In terms of assembly, forms homodimers. Interacts with ubiquitin-protein ligase UBE3A/E6-AP; this interaction stimulates UBE3A ubiquitin activity. Interacts with host TP53 and EP300; this interaction inhibits TP53 activity. Interacts with human ZYX.

The protein resides in the host cytoplasm. Its subcellular location is the host nucleus. In terms of biological role, plays a major role in the induction and maintenance of cellular transformation. E6 associates with host UBE3A/E6-AP ubiquitin-protein ligase and modulates its activity. Sequesters tumor suppressor TP53 in the host cytoplasm and modulates its activity by interacting with host EP300 that results in the reduction of TP53 acetylation and activation. In turn, apoptosis induced by DNA damage is inhibited. E6 also protects host keratinocytes from apoptosis by mediating the degradation of host BAK1. May also inhibit host immune response. In Human papillomavirus type 6a, this protein is Protein E6.